The sequence spans 872 residues: Eukaryotic translation initiation factor 3 subunit C (872 aa).

The segment at 1 to 100 is disordered; sequence MSRFFRGGDD…KVKSAKDKRF (100 aa). Acidic residues-rich tracts occupy residues 16–59 and 72–87; these read SSEE…DEEE and SDDE…SDDE. The span at 88–100 shows a compositional bias: basic and acidic residues; it reads ATTKVKSAKDKRF. In terms of domain architecture, PCI spans 613-787; it reads FHMHINLELL…ETVIFRKGVE (175 aa). The interval 812 to 872 is disordered; it reads TLEQKTQGSA…GGALGNAVRG (61 aa). A compositionally biased stretch (gly residues) spans 831–848; that stretch reads GGGQRGGGQRGGRGGART.

This sequence belongs to the eIF-3 subunit C family. Component of the eukaryotic translation initiation factor 3 (eIF-3) complex.

Its subcellular location is the cytoplasm. Component of the eukaryotic translation initiation factor 3 (eIF-3) complex, which is involved in protein synthesis of a specialized repertoire of mRNAs and, together with other initiation factors, stimulates binding of mRNA and methionyl-tRNAi to the 40S ribosome. The eIF-3 complex specifically targets and initiates translation of a subset of mRNAs involved in cell proliferation. This Neurospora crassa (strain ATCC 24698 / 74-OR23-1A / CBS 708.71 / DSM 1257 / FGSC 987) protein is Eukaryotic translation initiation factor 3 subunit C (nip-1).